The sequence spans 423 residues: MPVTAIVGGQWGDEGKGKVVDMLAQEADYVVRFSGGDNAGHTVINPMGEFKLHIIPSGVFYPGVKCIIGNGVVINPDVFIRERNELISRGVNVSNVFISDRAHLVLPYHILLDGLEEEARGNKSLGTTRRGIGPAFVDKYARMGIRVGDLLLPEYLRERLEYVLECKNQILTKVYDAAPISLDEIYETCLKWGKELAPNIRETTHIIEEAISQDKKIIMEGAQGALLDPDFGTYPYGTSSSPLAAGGCLGIGIGPASVSATLGVFKAYSTRVGGGPMPTELLDKTGDTIRNEAHEYGTTTGRPRRIGWFDAVAGRFSCQINGMTTAIMTRLDIMDILPKISICTAYELNGKIIKYFPANSGELAKCKPIYEEMPGWLCSTKEVRNYDDLPEAAKAYICRIEKLIGCQMSAVCIGPSREQTIYK.

Residues 12–18 and 40–42 each bind GTP; these read GDEGKGK and GHT. Catalysis depends on aspartate 13, which acts as the Proton acceptor. Positions 13 and 40 each coordinate Mg(2+). IMP is bound by residues 13–16, 38–41, threonine 128, arginine 142, glutamine 223, threonine 238, and arginine 302; these read DEGK and NAGH. Histidine 41 acts as the Proton donor in catalysis. 298 to 304 serves as a coordination point for substrate; the sequence is TTTGRPR. GTP contacts are provided by residues arginine 304, 330-332, and 412-414; these read RLD and CIG.

The protein belongs to the adenylosuccinate synthetase family. Homodimer. Requires Mg(2+) as cofactor.

Its subcellular location is the cytoplasm. The enzyme catalyses IMP + L-aspartate + GTP = N(6)-(1,2-dicarboxyethyl)-AMP + GDP + phosphate + 2 H(+). The protein operates within purine metabolism; AMP biosynthesis via de novo pathway; AMP from IMP: step 1/2. Plays an important role in the de novo pathway of purine nucleotide biosynthesis. Catalyzes the first committed step in the biosynthesis of AMP from IMP. In Dehalococcoides mccartyi (strain ATCC BAA-2100 / JCM 16839 / KCTC 5957 / BAV1), this protein is Adenylosuccinate synthetase.